A 266-amino-acid polypeptide reads, in one-letter code: 4-hydroxy-tetrahydrodipicolinate reductase (266 aa).

10–15 (GPRGRM) provides a ligand contact to NAD(+). Residue Lys-38 coordinates NADP(+). Residues 99-101 (GTT) and 125-128 (APNF) each bind NAD(+). His-155 acts as the Proton donor/acceptor in catalysis. Residue His-156 coordinates (S)-2,3,4,5-tetrahydrodipicolinate. The active-site Proton donor is Lys-159. 165 to 166 (GT) is a binding site for (S)-2,3,4,5-tetrahydrodipicolinate.

It belongs to the DapB family.

The protein resides in the cytoplasm. It catalyses the reaction (S)-2,3,4,5-tetrahydrodipicolinate + NAD(+) + H2O = (2S,4S)-4-hydroxy-2,3,4,5-tetrahydrodipicolinate + NADH + H(+). The catalysed reaction is (S)-2,3,4,5-tetrahydrodipicolinate + NADP(+) + H2O = (2S,4S)-4-hydroxy-2,3,4,5-tetrahydrodipicolinate + NADPH + H(+). Its pathway is amino-acid biosynthesis; L-lysine biosynthesis via DAP pathway; (S)-tetrahydrodipicolinate from L-aspartate: step 4/4. Functionally, catalyzes the conversion of 4-hydroxy-tetrahydrodipicolinate (HTPA) to tetrahydrodipicolinate. The sequence is that of 4-hydroxy-tetrahydrodipicolinate reductase from Bacillus cytotoxicus (strain DSM 22905 / CIP 110041 / 391-98 / NVH 391-98).